The following is a 425-amino-acid chain: tRNA(Ile)-lysidine synthase (425 aa).

An ATP-binding site is contributed by 27 to 32 (SGGLDS).

It belongs to the tRNA(Ile)-lysidine synthase family.

It localises to the cytoplasm. The catalysed reaction is cytidine(34) in tRNA(Ile2) + L-lysine + ATP = lysidine(34) in tRNA(Ile2) + AMP + diphosphate + H(+). Ligates lysine onto the cytidine present at position 34 of the AUA codon-specific tRNA(Ile) that contains the anticodon CAU, in an ATP-dependent manner. Cytidine is converted to lysidine, thus changing the amino acid specificity of the tRNA from methionine to isoleucine. This chain is tRNA(Ile)-lysidine synthase, found in Streptococcus pneumoniae serotype 2 (strain D39 / NCTC 7466).